The sequence spans 229 residues: Large ribosomal subunit protein uL1 (229 aa).

The protein belongs to the universal ribosomal protein uL1 family. In terms of assembly, part of the 50S ribosomal subunit.

In terms of biological role, binds directly to 23S rRNA. The L1 stalk is quite mobile in the ribosome, and is involved in E site tRNA release. Functionally, protein L1 is also a translational repressor protein, it controls the translation of the L11 operon by binding to its mRNA. The protein is Large ribosomal subunit protein uL1 of Mannheimia succiniciproducens (strain KCTC 0769BP / MBEL55E).